Reading from the N-terminus, the 273-residue chain is 3-methyl-2-oxobutanoate hydroxymethyltransferase (273 aa).

2 residues coordinate Mg(2+): Asp-53 and Asp-92. 3-methyl-2-oxobutanoate contacts are provided by residues 53–54 (DS), Asp-92, and Lys-122. Glu-124 contributes to the Mg(2+) binding site. The active-site Proton acceptor is the Glu-191.

It belongs to the PanB family. In terms of assembly, homodecamer; pentamer of dimers. Mg(2+) is required as a cofactor.

The protein resides in the cytoplasm. The catalysed reaction is 3-methyl-2-oxobutanoate + (6R)-5,10-methylene-5,6,7,8-tetrahydrofolate + H2O = 2-dehydropantoate + (6S)-5,6,7,8-tetrahydrofolate. Its pathway is cofactor biosynthesis; (R)-pantothenate biosynthesis; (R)-pantoate from 3-methyl-2-oxobutanoate: step 1/2. Its function is as follows. Catalyzes the reversible reaction in which hydroxymethyl group from 5,10-methylenetetrahydrofolate is transferred onto alpha-ketoisovalerate to form ketopantoate. The polypeptide is 3-methyl-2-oxobutanoate hydroxymethyltransferase (Bacteroides fragilis (strain ATCC 25285 / DSM 2151 / CCUG 4856 / JCM 11019 / LMG 10263 / NCTC 9343 / Onslow / VPI 2553 / EN-2)).